The primary structure comprises 330 residues: tRNA U34 carboxymethyltransferase (330 aa).

Residues lysine 91, tryptophan 105, lysine 110, glycine 130, 152 to 154 (DPS), 181 to 182 (IE), methionine 196, tyrosine 200, and arginine 315 each bind carboxy-S-adenosyl-L-methionine.

It belongs to the class I-like SAM-binding methyltransferase superfamily. CmoB family. Homotetramer.

The catalysed reaction is carboxy-S-adenosyl-L-methionine + 5-hydroxyuridine(34) in tRNA = 5-carboxymethoxyuridine(34) in tRNA + S-adenosyl-L-homocysteine + H(+). In terms of biological role, catalyzes carboxymethyl transfer from carboxy-S-adenosyl-L-methionine (Cx-SAM) to 5-hydroxyuridine (ho5U) to form 5-carboxymethoxyuridine (cmo5U) at position 34 in tRNAs. The sequence is that of tRNA U34 carboxymethyltransferase from Shewanella denitrificans (strain OS217 / ATCC BAA-1090 / DSM 15013).